The sequence spans 88 residues: DNA-directed RNA polymerase subunit omega (88 aa).

This sequence belongs to the RNA polymerase subunit omega family. The RNAP catalytic core consists of 2 alpha, 1 beta, 1 beta' and 1 omega subunit. When a sigma factor is associated with the core the holoenzyme is formed, which can initiate transcription.

It catalyses the reaction RNA(n) + a ribonucleoside 5'-triphosphate = RNA(n+1) + diphosphate. In terms of biological role, promotes RNA polymerase assembly. Latches the N- and C-terminal regions of the beta' subunit thereby facilitating its interaction with the beta and alpha subunits. In Haemophilus influenzae (strain PittEE), this protein is DNA-directed RNA polymerase subunit omega.